The sequence spans 78 residues: MKDFLAYIIKNLVDRPEEVHIKEVQGTHTIIYELTVAKPDIGKIIGKEGRTIKAIRTLLVSVASRNNVKVSLEIMEDK.

Positions 29–78 (TIIYELTVAKPDIGKIIGKEGRTIKAIRTLLVSVASRNNVKVSLEIMEDK) constitute a KH domain.

The protein belongs to the KhpA RNA-binding protein family.

Its subcellular location is the cytoplasm. Functionally, a probable RNA-binding protein. In Chlamydia caviae (strain ATCC VR-813 / DSM 19441 / 03DC25 / GPIC) (Chlamydophila caviae), this protein is RNA-binding protein KhpA.